Consider the following 60-residue polypeptide: Large ribosomal subunit protein bL32 (60 aa).

A disordered region spans residues 1 to 36; sequence MAVQQNKKSPSKRGMHRSHNALNTPGLAIEPTTGET. Residues 9-19 show a composition bias toward basic residues; the sequence is SPSKRGMHRSH.

Belongs to the bacterial ribosomal protein bL32 family.

The sequence is that of Large ribosomal subunit protein bL32 from Methylibium petroleiphilum (strain ATCC BAA-1232 / LMG 22953 / PM1).